The primary structure comprises 583 residues: 2-succinyl-5-enolpyruvyl-6-hydroxy-3-cyclohexene-1-carboxylate synthase (583 aa).

The protein belongs to the TPP enzyme family. MenD subfamily. As to quaternary structure, homodimer. It depends on Mg(2+) as a cofactor. The cofactor is Mn(2+). Requires thiamine diphosphate as cofactor.

It catalyses the reaction isochorismate + 2-oxoglutarate + H(+) = 5-enolpyruvoyl-6-hydroxy-2-succinyl-cyclohex-3-ene-1-carboxylate + CO2. It participates in quinol/quinone metabolism; 1,4-dihydroxy-2-naphthoate biosynthesis; 1,4-dihydroxy-2-naphthoate from chorismate: step 2/7. The protein operates within quinol/quinone metabolism; menaquinone biosynthesis. Its function is as follows. Catalyzes the thiamine diphosphate-dependent decarboxylation of 2-oxoglutarate and the subsequent addition of the resulting succinic semialdehyde-thiamine pyrophosphate anion to isochorismate to yield 2-succinyl-5-enolpyruvyl-6-hydroxy-3-cyclohexene-1-carboxylate (SEPHCHC). This chain is 2-succinyl-5-enolpyruvyl-6-hydroxy-3-cyclohexene-1-carboxylate synthase, found in Chlorobaculum parvum (strain DSM 263 / NCIMB 8327) (Chlorobium vibrioforme subsp. thiosulfatophilum).